We begin with the raw amino-acid sequence, 614 residues long: Bifunctional 3'-phosphoadenosine 5'-phosphosulfate synthase 2 (614 aa).

The interval 1-215 (MSGIKKQKTE…VVELLQEQNI (215 aa)) is adenylyl-sulfate kinase. An ATP-binding site is contributed by 52 to 57 (GAGKTT). Residues 79–82 (DNVR), Phe-91, 96–99 (REEN), 122–123 (IS), Lys-161, and 174–175 (GF) contribute to the adenosine 5'-phosphosulfate site. ATP is bound by residues Ser-197, 409 to 412 (QLRN), 511 to 515 (GRDPA), and Ala-553. Positions 224-614 (IHELFVPENK…TDYYRSLEKN (391 aa)) are sulfate adenylyltransferase.

The protein in the N-terminal section; belongs to the APS kinase family. It in the C-terminal section; belongs to the sulfate adenylyltransferase family. In terms of tissue distribution, expressed in cartilage and adrenal gland.

It carries out the reaction sulfate + ATP + H(+) = adenosine 5'-phosphosulfate + diphosphate. The catalysed reaction is adenosine 5'-phosphosulfate + ATP = 3'-phosphoadenylyl sulfate + ADP + H(+). It participates in sulfur metabolism; sulfate assimilation. Its function is as follows. Bifunctional enzyme with both ATP sulfurylase and APS kinase activity, which mediates two steps in the sulfate activation pathway. The first step is the transfer of a sulfate group to ATP to yield adenosine 5'-phosphosulfate (APS), and the second step is the transfer of a phosphate group from ATP to APS yielding 3'-phosphoadenylylsulfate/PAPS, the activated sulfate donor used by sulfotransferases. In mammals, PAPS is the sole source of sulfate while APS appears to only be an intermediate in the sulfate-activation pathway. Plays indirectly an important role in skeletogenesis during postnatal growth. This Homo sapiens (Human) protein is Bifunctional 3'-phosphoadenosine 5'-phosphosulfate synthase 2 (PAPSS2).